Here is a 108-residue protein sequence, read N- to C-terminus: UPF0060 membrane protein amb3269 (108 aa).

Helical transmembrane passes span 4-24 (IPTY…FWAW), 31-51 (PLWL…LTRI), 59-79 (AYAA…WAVE), and 85-105 (RWDT…IFGP).

This sequence belongs to the UPF0060 family.

It is found in the cell inner membrane. This is UPF0060 membrane protein amb3269 from Paramagnetospirillum magneticum (strain ATCC 700264 / AMB-1) (Magnetospirillum magneticum).